The following is a 1825-amino-acid chain: Proteasome activator complex subunit 4B (1825 aa).

HEAT repeat units lie at residues 458 to 502 (PEGP…LVDC), 981 to 1020 (NFCC…NHCG), 1162 to 1200 (YPLP…QLKR), 1336 to 1374 (DAFL…GSKH), 1618 to 1656 (PEQI…YNLF), and 1662 to 1700 (EQCV…CNFL). Residues 1632-1720 (AGSSSWHARY…EALCKTRLPK (89 aa)) form a bromodomain-like (BRDL) region.

It belongs to the BLM10 family. Homodimer. Interacts with the 20S and 26S proteasomes.

It localises to the cytoplasm. The protein resides in the cytosol. The protein localises to the nucleus. Its subcellular location is the nucleus speckle. Functionally, associated component of the proteasome that specifically recognizes acetylated histones and promotes ATP- and ubiquitin-independent degradation of core histones during DNA damage response. Recognizes and binds acetylated histones via its bromodomain-like (BRDL) region and activates the proteasome by opening the gated channel for substrate entry. Binds to the core proteasome via its C-terminus, which occupies the same binding sites as the proteasomal ATPases, opening the closed structure of the proteasome via an active gating mechanism. involved in DNA damage response in somatic cells: binds to acetylated histones and promotes degradation of histones. This is Proteasome activator complex subunit 4B (psme4b) from Danio rerio (Zebrafish).